A 570-amino-acid polypeptide reads, in one-letter code: MLGVIQYSILTIFWLPIAAAXLYGAGLAIYRLFLSPLAKFPGPKLAALTRKYESYYEAYQNYEYYWKIKELHKQYGELFTPLTASFXRXGPIVRVNPHELHIDDKDFYYKLNSFQGAWNKDPYTAHQFANPGSIVGTIDHDIHRKRRAAIMPFFSKQKIYALESVIQGMVDKLCYRIEEYGKTGQPVNLRNASKCFAADVVGEYCFAESGGLXDKPDFAIEEMNQQQQGLKAGLRARYLPSWWMPVVRGAPAWIRASIDPAAKHFEVWHRVSDSLFVRLYDARKXGPVGRMEKRKNDEFYEKAGHRTIFHELINSPHLPPEEKGTGRIIQEAGAMVGAGGESTSQVITAFVYCLLANPQVLSRLREELRSVIPNADSPAPTLRQLEALPYLVGPLLXSTYKYVGYLLTLVARLRTGKIARHQRVPRDRPLYFNEWEIPAGVSXHEDNIPMASTDTAQTICSMTPIFLQIDPEVYPNPHAFMPERWLNLDEXQRQRLEHNLVPYSKGTRGCAGLTLANAELYMLIPALVTRFDLELFDSDAWDTEMAVDSHHHSPRPDSKGVKVFVKKSTF.

A helical transmembrane segment spans residues 9-29 (ILTIFWLPIAAAXLYGAGLAI). N-linked (GlcNAc...) asparagine glycosylation is present at asparagine 191. Heme is bound at residue cysteine 510.

The protein belongs to the cytochrome P450 family. The cofactor is heme.

It localises to the membrane. It functions in the pathway secondary metabolite biosynthesis. Its function is as follows. Non-reducing polyketide synthase; part of the gene cluster that mediates the biosynthesis of orcinol depsidone grayanic acid (GRA), the only major secondary metabolite known in C.grayi. The first step consists in the ring and depside synthesis by PKS16 leading to 4-O-demethylsphaerophorin, involving different orcinol-like rings, one with acetyl CoA and the other with octanoyl CoA as the starter. Further depsidone formation by the GRA cluster-specific cytochrome P450 leads to 4-O-demethylgrayanic acid. Finally, the cluster specific O-methyltransferase probably converts the 4-O-demethylgrayanic acid into grayanic acid. The polypeptide is Grayanic acid biosynthesis cluster cytochrome P450 monooxygenase (Cladonia grayi (Gray's cup lichen)).